Reading from the N-terminus, the 243-residue chain is Ribonuclease 3 (243 aa).

An RNase III domain is found at 10 to 146; sequence VNRFRKRFDT…FIGALYLDQG (137 aa). Glu-59 lines the Mg(2+) pocket. Asp-63 is an active-site residue. Mg(2+) is bound by residues Asp-132 and Glu-135. Residue Glu-135 is part of the active site. Positions 172 to 241 constitute a DRBM domain; that stretch reads DFKTQFQEYV…AKSAYKQLKQ (70 aa). Basic and acidic residues predominate over residues 219–231; that stretch reads GKGKTKKESEQRA. The interval 219–243 is disordered; it reads GKGKTKKESEQRAAKSAYKQLKQIK.

This sequence belongs to the ribonuclease III family. In terms of assembly, homodimer. The cofactor is Mg(2+).

The protein resides in the cytoplasm. It carries out the reaction Endonucleolytic cleavage to 5'-phosphomonoester.. In terms of biological role, digests double-stranded RNA. Involved in the processing of primary rRNA transcript to yield the immediate precursors to the large and small rRNAs (23S and 16S). Processes some mRNAs, and tRNAs when they are encoded in the rRNA operon. Processes pre-crRNA and tracrRNA of type II CRISPR loci if present in the organism. The sequence is that of Ribonuclease 3 from Staphylococcus aureus (strain Mu3 / ATCC 700698).